Here is a 243-residue protein sequence, read N- to C-terminus: Outer membrane protein A (243 aa).

5 consecutive transmembrane segments (beta stranded) span residues 1 to 8 (LTAKLGYP), 13 to 21 (LDIYTRLGG), 47 to 56 (PVFAGGLEWA), 61 to 68 (IATRLEYQ), and 87 to 95 (LLSVGVSYR). 4 consecutive repeat copies span residues 107-108 (AP), 109-110 (AP), 111-112 (AP), and 113-114 (AP). The 4 X 2 AA tandem repeats of A-P stretch occupies residues 107-114 (APAPAPAP). In terms of domain architecture, OmpA-like spans 116 to 243 (VQTKHFTLKS…RRVEIEVKGI (128 aa)). The cysteines at positions 217 and 229 are disulfide-linked.

Belongs to the outer membrane OOP (TC 1.B.6) superfamily. OmpA family. As to quaternary structure, monomer and homodimer.

It is found in the cell outer membrane. With TolR probably plays a role in maintaining the position of the peptidoglycan cell wall in the periplasm. Acts as a porin with low permeability that allows slow penetration of small solutes; an internal gate slows down solute passage. This Atlantibacter hermannii (Escherichia hermannii) protein is Outer membrane protein A.